The sequence spans 86 residues: RNA-binding protein Hfq (86 aa).

One can recognise a Sm domain in the interval 9-68 (DPYLNTLRKEKVGVSIYLVNGIKLQGTIESFDQFVILLKNTVSQMVYKHAISTVVPVRPI).

The protein belongs to the Hfq family. In terms of assembly, homohexamer.

In terms of biological role, RNA chaperone that binds small regulatory RNA (sRNAs) and mRNAs to facilitate mRNA translational regulation in response to envelope stress, environmental stress and changes in metabolite concentrations. Also binds with high specificity to tRNAs. This is RNA-binding protein Hfq from Pseudomonas savastanoi pv. phaseolicola (strain 1448A / Race 6) (Pseudomonas syringae pv. phaseolicola (strain 1448A / Race 6)).